Consider the following 68-residue polypeptide: Neuronal regeneration-related protein (68 aa).

The disordered stretch occupies residues 22–54 (EGRLPKGRLPVPKEVNRKKNDETNAASLTPLGS). The span at 44 to 54 (TNAASLTPLGS) shows a compositional bias: polar residues. S59 carries the phosphoserine modification.

In terms of assembly, interacts with the latency-associated peptides (LAP) of TGFB1 and TGFB2; the interaction results in a decrease in TGFB autoinduction. Interacts with FLNA. In terms of processing, phosphorylated on Ser-59. Phosphorylation decreases stability and activity. Expressed in lung (at protein level).

Its subcellular location is the cytoplasm. Its function is as follows. May have roles in neural function. Ectopic expression augments motility of gliomas. Also promotes axonal regeneration. May also have functions in cellular differentiation. Induces differentiation of fibroblast into myofibroblast and myofibroblast ameboid migration. Increases retinoic-acid regulation of lipid-droplet biogenesis. Down-regulates the expression of TGFB1 and TGFB2 but not of TGFB3. May play a role in the regulation of alveolar generation. The polypeptide is Neuronal regeneration-related protein (NREP) (Homo sapiens (Human)).